A 319-amino-acid chain; its full sequence is ATP-dependent 6-phosphofructokinase (319 aa).

An ATP-binding site is contributed by Gly-11. Residue Arg-21 to Arg-25 coordinates ADP. Residues Arg-72 to Cys-73 and Gly-102 to Ser-105 contribute to the ATP site. Asp-103 contacts Mg(2+). A substrate-binding site is contributed by Thr-125–Asp-127. The active-site Proton acceptor is Asp-127. Arg-154 is a binding site for ADP. Substrate is bound by residues Arg-162 and Met-169–Arg-171. ADP-binding positions include Gly-185 to Glu-187, Lys-211, and Lys-213 to His-215. Substrate is bound by residues Glu-222, Arg-243, and His-249–Arg-252.

It belongs to the phosphofructokinase type A (PFKA) family. ATP-dependent PFK group I subfamily. Prokaryotic clade 'B1' sub-subfamily. Homotetramer. Mg(2+) is required as a cofactor.

The protein resides in the cytoplasm. It carries out the reaction beta-D-fructose 6-phosphate + ATP = beta-D-fructose 1,6-bisphosphate + ADP + H(+). It participates in carbohydrate degradation; glycolysis; D-glyceraldehyde 3-phosphate and glycerone phosphate from D-glucose: step 3/4. With respect to regulation, allosterically activated by ADP and other diphosphonucleosides, and allosterically inhibited by phosphoenolpyruvate. Its function is as follows. Catalyzes the phosphorylation of D-fructose 6-phosphate to fructose 1,6-bisphosphate by ATP, the first committing step of glycolysis. This chain is ATP-dependent 6-phosphofructokinase, found in Clostridium botulinum (strain ATCC 19397 / Type A).